Reading from the N-terminus, the 1255-residue chain is MEPSGGGLGPGRGTRDKKKGRSPDELPATGGDGGKHKKFLERFTSMRIKKEKEKPNSAHRNSSASYGDDPTAQSLQDISDEQVLVLFEQMLVDMNLNEEKQQPLREKDIVIKREMVSQYLHTSKAGMNQKESSRSAMMYIQELRSGLRDMHLLSCLESLRVSLNNNPVSWVQTFGAEGLASLLDILKRLHDEKEETSGNYDSRNQHEIIRCLKAFMNNKFGIKTMLETEEGILLLVRAMDPAVPNMMIDAAKLLSALCILPQPEDMNERVLEAMTERAEMDEVERFQPLLDGLKSGTSIALKVGCLQLINALITPAEELDFRVHIRSELMRLGLHQVLQELREIENEDMKVQLCVFDEQGDEDFFDLKGRLDDIRMEMDDFGEVFQIILNTVKDSKAEPHFLSILQHLLLVRNDYEARPQYYKLIEECVSQIVLHKNGTDPDFKCRHLQIDIERLVDQMIDKTKVEKSEAKATELEKKLDSELTARHELQVEMKKMENDFEQKLQDLQGEKDALDSEKQQITAQKQDLEAEVSKLTGEVAKLSKELEDAKNEMASLSAVVVAPSVSSSAAVPPAPPLPGDSGTVIPPPPPPPPLPGGVVPPSPPLPPGTCIPPPPPLPGGACIPPPPQLPGSAAIPPPPPLPGVASIPPPPPLPGATAIPPPPPLPGATAIPPPPPLPGGTGIPPPPPPLPGSVGVPPPPPLPGGPGLPPPPPPFPGAPGIPPPPPGMGVPPPPPFGFGVPAAPVLPFGLTPKKVYKPEVQLRRPNWSKFVAEDLSQDCFWTKVKEDRFENNELFAKLTLAFSAQTKTSKAKKDQEGGEEKKSVQKKKVKELKVLDSKTAQNLSIFLGSFRMPYQEIKNVILEVNEAVLTESMIQNLIKQMPEPEQLKMLSELKEEYDDLAESEQFGVVMGTVPRLRPRLNAILFKLQFSEQVENIKPEIVSVTAACEELRKSENFSSLLELTLLVGNYMNAGSRNAGAFGFNISFLCKLRDTKSADQKMTLLHFLAELCENDHPEVLKFPDELAHVEKASRVSAENLQKSLDQMKKQIADVERDVQNFPAATDEKDKFVEKMTSFVKDAQEQYNKLRMMHSNMETLYKELGDYFVFDPKKLSVEEFFMDLHNFRNMFLQAVKENQKRRETEEKMRRAKLAKEKAEKERLEKQQKREQLIDMNAEGDETGVMDSLLEALQSGAAFRRKRGPRQVNRKAGCAVTSLLASELTKDDAMAPGPVKVPKKSEGVPTILEEAKELVGRAS.

Met1 bears the N-acetylmethionine mark. Residues 1–12 (MEPSGGGLGPGR) show a composition bias toward gly residues. The tract at residues 1 to 73 (MEPSGGGLGP…ASYGDDPTAQ (73 aa)) is disordered. The residue at position 22 (Ser22) is a Phosphoserine. A compositionally biased stretch (polar residues) spans 58–73 (AHRNSSASYGDDPTAQ). In terms of domain architecture, GBD/FH3 spans 75–440 (LQDISDEQVL…QIVLHKNGTD (366 aa)). A coiled-coil region spans residues 460 to 562 (IDKTKVEKSE…MASLSAVVVA (103 aa)). Positions 567-737 (SSAAVPPAPP…MGVPPPPPFG (171 aa)) are disordered. The segment covering 585-736 (IPPPPPPPPL…GMGVPPPPPF (152 aa)) has biased composition (pro residues). Positions 586-747 (PPPPPPPPLP…FGVPAAPVLP (162 aa)) constitute an FH1 domain. Residue Thr751 is modified to Phosphothreonine. The FH2 domain maps to 752–1154 (PKKVYKPEVQ…MRRAKLAKEK (403 aa)). The stretch at 1027–1179 (VEKASRVSAE…IDMNAEGDET (153 aa)) forms a coiled coil. An N6-acetyllysine mark is found at Lys1040 and Lys1086. Tyr1104 is subject to Phosphotyrosine. Positions 1177-1205 (DETGVMDSLLEALQSGAAFRRKRGPRQVN) constitute a DAD domain. Position 1237 is a phosphoserine (Ser1237).

Belongs to the formin homology family. Diaphanous subfamily. Homodimer. Interacts with the GTP-bound form of RHOA. Interacts with RHOC, PFY1, MAPRE1, BAIAP2 and APC. Interacts with APC; acts as a scaffold protein for MAPRE1 and APC to stabilize microtubules and promote cell migration. Interacts with SCAI. Interacts with DCAF7, via FH2 domain. Interacts with NCDN. Interacts with OSBPL10, OSBPL2, VIM, TUBB and DYN1. In terms of processing, phosphorylation at Thr-751 is stimulated by cAMP and regulates stability, complex formation and mitochondrial movement. Widely expressed. In the organ of Corti, it is expressed at the outer and inner hair cell layers. Expression at the inner hair cell layer is restricted to inner pillar cells. Detected in cochlear spiral ganglion neurons.

Its subcellular location is the cell membrane. The protein localises to the cell projection. It localises to the ruffle membrane. The protein resides in the cytoplasm. It is found in the cytoskeleton. Its subcellular location is the microtubule organizing center. The protein localises to the centrosome. It localises to the spindle. The protein resides in the nucleus. Functionally, actin nucleation and elongation factor required for the assembly of F-actin structures, such as actin cables and stress fibers. Binds to the barbed end of the actin filament and slows down actin polymerization and depolymerization. Required for cytokinesis, and transcriptional activation of the serum response factor. DFR proteins couple Rho and Src tyrosine kinase during signaling and the regulation of actin dynamics. Functions as a scaffold protein for MAPRE1 and APC to stabilize microtubules and promote cell migration. Has neurite outgrowth promoting activity. Acts in a Rho-dependent manner to recruit PFY1 to the membrane. The MEMO1-RHOA-DIAPH1 signaling pathway plays an important role in ERBB2-dependent stabilization of microtubules at the cell cortex. It controls the localization of APC and CLASP2 to the cell membrane, via the regulation of GSK3B activity. In turn, membrane-bound APC allows the localization of the MACF1 to the cell membrane, which is required for microtubule capture and stabilization. Plays a role in the regulation of cell morphology and cytoskeletal organization. Required in the control of cell shape. Also acts as an actin nucleation and elongation factor in the nucleus by promoting nuclear actin polymerization inside the nucleus to drive serum-dependent SRF-MRTFA activity. In Mus musculus (Mouse), this protein is Protein diaphanous homolog 1 (Diaph1).